Here is a 200-residue protein sequence, read N- to C-terminus: RNA polymerase I-specific transcription initiation factor rrn11 (200 aa).

The protein resides in the nucleus. In terms of biological role, subunit of a multiprotein complex essential for the initiation of rDNA transcription by RNA polymerase I. Binding to the DNA template is dependent on the initial binding of other factors. The polypeptide is RNA polymerase I-specific transcription initiation factor rrn11 (rrn11) (Schizosaccharomyces pombe (strain 972 / ATCC 24843) (Fission yeast)).